A 694-amino-acid chain; its full sequence is ATP-binding cassette sub-family G member 8 (694 aa).

Over 1–437 (MAEKTKEETQ…ISNDFRDLPT (437 aa)) the chain is Cytoplasmic. Residues 91 to 335 (AQFKLPWRSR…FTSIGYPCPR (245 aa)) form the ABC transporter domain. Residues 436 to 684 (PTLFIHGAEA…FLSLYYLSLK (249 aa)) form the ABC transmembrane type-2 domain. The helical transmembrane segment at 438–458 (LFIHGAEACLMSLIIGFLYYG) threads the bilayer. Residues 459 to 468 (HADKPLSFMD) are Extracellular-facing. Residues 469–489 (MAALLFMIGALIPFNVILDVV) traverse the membrane as a helical segment. The Cytoplasmic portion of the chain corresponds to 490-518 (SKCHSERSLLYYELEDGLYTAGPYFFAKV). Residues 519-539 (LGELPEHCAYVIIYGMPIYWL) form a helical membrane-spanning segment. Residues 540–548 (TNLRPGPEL) are Extracellular-facing. Residues 549-569 (FLLHFMLLWLVVFCCRTMALA) form a helical membrane-spanning segment. The Cytoplasmic portion of the chain corresponds to 570-576 (ASAMLPT). The chain crosses the membrane as a helical span at residues 577–597 (FHMSSFCCNALYNSFYLTAGF). The Extracellular portion of the chain corresponds to 598–660 (MINLNNLWIV…VTAMDLNSHP (63 aa)). N640 carries N-linked (GlcNAc...) asparagine glycosylation. Residues 661–681 (LYAIYLIVIGISCGFLSLYYL) traverse the membrane as a helical segment. At 682-694 (SLKFIKQKSIQDW) the chain is on the cytoplasmic side.

This sequence belongs to the ABC transporter superfamily. ABCG family. Eye pigment precursor importer (TC 3.A.1.204) subfamily. Heterodimer with ABCG8. It depends on Mg(2+) as a cofactor. Post-translationally, N-glycosylated. N-glycosylation is important for efficient export out of the endoplasmic reticulum. As to expression, highest expression in liver, with lower levels in small intestine and colon.

It is found in the cell membrane. The protein localises to the apical cell membrane. The enzyme catalyses cholesterol(in) + ATP + H2O = cholesterol(out) + ADP + phosphate + H(+). It carries out the reaction sitosterol(in) + ATP + H2O = sitosterol(out) + ADP + phosphate + H(+). Its function is as follows. ABCG5 and ABCG8 form an obligate heterodimer that mediates Mg(2+)- and ATP-dependent sterol transport across the cell membrane. Plays an essential role in the selective transport of the dietary cholesterol in and out of the enterocytes and in the selective sterol excretion by the liver into bile. Required for normal sterol homeostasis. The heterodimer with ABCG5 has ATPase activity. The sequence is that of ATP-binding cassette sub-family G member 8 from Rattus norvegicus (Rat).